A 716-amino-acid chain; its full sequence is Translation initiation factor IF-2 (716 aa).

A disordered region spans residues 52–135 (QQESNNNTKQ…PAAEPKEMPS (84 aa)). Low complexity predominate over residues 56-125 (NNNTKQNTQN…KNNKGNKNNK (70 aa)). One can recognise a tr-type G domain in the interval 218–387 (ERPAVVTIMG…GLVAEVQELK (170 aa)). Residues 227–234 (GHVDHGKT) are G1. Position 227–234 (227–234 (GHVDHGKT)) interacts with GTP. The tract at residues 252 to 256 (GITQH) is G2. The interval 273-276 (DTPG) is G3. GTP is bound by residues 273-277 (DTPGH) and 327-330 (NKID). The tract at residues 327–330 (NKID) is G4. The interval 363–365 (SAL) is G5.

The protein belongs to the TRAFAC class translation factor GTPase superfamily. Classic translation factor GTPase family. IF-2 subfamily.

It localises to the cytoplasm. In terms of biological role, one of the essential components for the initiation of protein synthesis. Protects formylmethionyl-tRNA from spontaneous hydrolysis and promotes its binding to the 30S ribosomal subunits. Also involved in the hydrolysis of GTP during the formation of the 70S ribosomal complex. This chain is Translation initiation factor IF-2, found in Staphylococcus haemolyticus (strain JCSC1435).